We begin with the raw amino-acid sequence, 345 residues long: Variable large protein 23 (345 aa).

The signal sequence occupies residues 1–18; it reads MRKRISAIIMTLFMVLVS. A lipid anchor (N-palmitoyl cysteine) is attached at Cys19. Cys19 carries the S-diacylglycerol cysteine lipid modification.

This sequence belongs to the variable large protein (Vlp) family. Delta subfamily.

Its subcellular location is the cell outer membrane. The Vlp and Vsp proteins are antigenically distinct proteins, only one vlp or vsp gene is transcriptionally active at any one time. Switching between these genes is a mechanism of host immune response evasion. The protein is Variable large protein 23 of Borrelia hermsii.